Here is a 141-residue protein sequence, read N- to C-terminus: Early nodulin-like protein 19 (141 aa).

An N-terminal signal peptide occupies residues Met-1–Ala-26. The Phytocyanin domain maps to Lys-27–Thr-127. N-linked (GlcNAc...) asparagine glycosylation is found at Asn-42 and Asn-88. A disulfide bond links Cys-80 and Cys-115.

The protein belongs to the early nodulin-like (ENODL) family.

Its function is as follows. May act as a carbohydrate transporter. The polypeptide is Early nodulin-like protein 19 (Arabidopsis thaliana (Mouse-ear cress)).